We begin with the raw amino-acid sequence, 166 residues long: UPF0179 protein Tneu_1978 (166 aa).

Residues 140-166 form a disordered region; the sequence is PPSPSKSGGATASRDPSRAPPSRPLSK. Over residues 157 to 166 the composition is skewed to pro residues; the sequence is RAPPSRPLSK.

The protein belongs to the UPF0179 family.

This chain is UPF0179 protein Tneu_1978, found in Pyrobaculum neutrophilum (strain DSM 2338 / JCM 9278 / NBRC 100436 / V24Sta) (Thermoproteus neutrophilus).